The primary structure comprises 270 residues: Regulatory protein RecX (270 aa).

The protein belongs to the RecX family.

The protein localises to the cytoplasm. In terms of biological role, modulates RecA activity. This chain is Regulatory protein RecX, found in Bacillus cereus (strain 03BB102).